The chain runs to 436 residues: GTPase Der (436 aa).

EngA-type G domains lie at 4–167 (PTIA…PAQE) and 175–351 (IKFS…ESQN). Residues 10-17 (GRPNVGKS), 57-61 (DTGGI), 119-122 (NKVD), 181-188 (GRPNVGKS), 229-233 (DTAGM), and 294-297 (NKWD) contribute to the GTP site. A KH-like domain is found at 352–436 (TRIPSAVLND…PIHLIARKRK (85 aa)).

It belongs to the TRAFAC class TrmE-Era-EngA-EngB-Septin-like GTPase superfamily. EngA (Der) GTPase family. In terms of assembly, associates with the 50S ribosomal subunit.

Its function is as follows. GTPase that plays an essential role in the late steps of ribosome biogenesis. This is GTPase Der from Streptococcus suis (strain 98HAH33).